The following is a 638-amino-acid chain: Chaperone protein HtpG (638 aa).

The tract at residues 1–346 (MSQQETHGFQ…SNDLPLNVSR (346 aa)) is a; substrate-binding. Positions 347 to 563 (EILQDNKVTT…EGEMSTQMIK (217 aa)) are b. Residues 564-638 (LMQAAGQDVP…MNQMLLASVK (75 aa)) form a c region.

This sequence belongs to the heat shock protein 90 family. In terms of assembly, homodimer.

Its subcellular location is the cytoplasm. In terms of biological role, molecular chaperone. Has ATPase activity. The chain is Chaperone protein HtpG from Shewanella pealeana (strain ATCC 700345 / ANG-SQ1).